Consider the following 254-residue polypeptide: Alcohol dehydrogenase (254 aa).

10 to 33 (FVAGLGGIGFDTSREIVKSGPKNL) is an NAD(+) binding site. Residue Ser138 participates in substrate binding. The Proton acceptor role is filled by Tyr151.

The protein belongs to the short-chain dehydrogenases/reductases (SDR) family. In terms of assembly, homodimer.

The catalysed reaction is a primary alcohol + NAD(+) = an aldehyde + NADH + H(+). The enzyme catalyses a secondary alcohol + NAD(+) = a ketone + NADH + H(+). The protein is Alcohol dehydrogenase (Adh) of Drosophila mayaguana (Fruit fly).